An 87-amino-acid polypeptide reads, in one-letter code: uncharacterized protein (87 aa).

The N-terminal stretch at 1–19 is a signal peptide; the sequence is MLVLQLAVLVTAVYAFVHA. Residues 51 to 71 form a helical membrane-spanning segment; the sequence is ILGFVFGVLGIVIAACAAGVY.

It to M.tuberculosis Rv0476.

The protein resides in the membrane. This is an uncharacterized protein from Mycobacterium leprae (strain TN).